The sequence spans 430 residues: Ribosomal protein uS12 methylthiotransferase RimO (430 aa).

In terms of domain architecture, MTTase N-terminal spans 1 to 116 (MRVGIKVLGC…IANALEKGTD (116 aa)). Positions 10, 46, 79, 148, 152, and 155 each coordinate [4Fe-4S] cluster. A Radical SAM core domain is found at 134-365 (LEERPYAYVK…LLQAEISNSR (232 aa)). A TRAM domain is found at 367–430 (DRFIGRKLKF…DEYDMWGSVT (64 aa)).

It belongs to the methylthiotransferase family. RimO subfamily. Requires [4Fe-4S] cluster as cofactor.

The protein resides in the cytoplasm. It catalyses the reaction L-aspartate(89)-[ribosomal protein uS12]-hydrogen + (sulfur carrier)-SH + AH2 + 2 S-adenosyl-L-methionine = 3-methylsulfanyl-L-aspartate(89)-[ribosomal protein uS12]-hydrogen + (sulfur carrier)-H + 5'-deoxyadenosine + L-methionine + A + S-adenosyl-L-homocysteine + 2 H(+). In terms of biological role, catalyzes the methylthiolation of an aspartic acid residue of ribosomal protein uS12. This chain is Ribosomal protein uS12 methylthiotransferase RimO, found in Thermotoga sp. (strain RQ2).